Here is a 180-residue protein sequence, read N- to C-terminus: ATP-dependent protease subunit HslV (180 aa).

Residue threonine 8 is part of the active site. The Na(+) site is built by alanine 165, cysteine 168, and threonine 171.

This sequence belongs to the peptidase T1B family. HslV subfamily. In terms of assembly, a double ring-shaped homohexamer of HslV is capped on each side by a ring-shaped HslU homohexamer. The assembly of the HslU/HslV complex is dependent on binding of ATP.

Its subcellular location is the cytoplasm. The catalysed reaction is ATP-dependent cleavage of peptide bonds with broad specificity.. Allosterically activated by HslU binding. In terms of biological role, protease subunit of a proteasome-like degradation complex believed to be a general protein degrading machinery. The chain is ATP-dependent protease subunit HslV from Macrococcus caseolyticus (strain JCSC5402) (Macrococcoides caseolyticum).